The primary structure comprises 300 residues: Tyrosine recombinase XerD (300 aa).

Positions 6 to 89 (LFHKRLIEQF…ALKVFFHFLK (84 aa)) constitute a Core-binding (CB) domain. One can recognise a Tyr recombinase domain in the interval 108 to 293 (RLPSILSTEE…ASESLIEKFH (186 aa)). Active-site residues include arginine 152, lysine 174, histidine 245, arginine 248, and histidine 271. Tyrosine 280 serves as the catalytic O-(3'-phospho-DNA)-tyrosine intermediate.

This sequence belongs to the 'phage' integrase family. XerD subfamily. In terms of assembly, forms a cyclic heterotetrameric complex composed of two molecules of XerC and two molecules of XerD.

Its subcellular location is the cytoplasm. Its function is as follows. Site-specific tyrosine recombinase, which acts by catalyzing the cutting and rejoining of the recombining DNA molecules. The XerC-XerD complex is essential to convert dimers of the bacterial chromosome into monomers to permit their segregation at cell division. It also contributes to the segregational stability of plasmids. This is Tyrosine recombinase XerD from Chlamydia trachomatis serovar D (strain ATCC VR-885 / DSM 19411 / UW-3/Cx).